Here is a 338-residue protein sequence, read N- to C-terminus: Putative peptide import ATP-binding protein BOV_A0348 (338 aa).

The ABC transporter domain maps to 10 to 263 (KGLRTVFRTR…PRHPYTMGLL (254 aa)). 43–50 (GESGSGKS) lines the ATP pocket.

The protein belongs to the ABC transporter superfamily. The complex is composed of two ATP-binding proteins (BOV_A0347 and BOV_A0348), two transmembrane proteins (BOV_A0350 and BOV_A0351) and a solute-binding protein (BOV_A0352).

It is found in the cell inner membrane. Functionally, probably part of an ABC transporter complex that could be involved in peptide import. Probably responsible for energy coupling to the transport system. The protein is Putative peptide import ATP-binding protein BOV_A0348 of Brucella ovis (strain ATCC 25840 / 63/290 / NCTC 10512).